The chain runs to 104 residues: Small ribosomal subunit protein uS10 (104 aa).

It belongs to the universal ribosomal protein uS10 family. In terms of assembly, part of the 30S ribosomal subunit.

Its function is as follows. Involved in the binding of tRNA to the ribosomes. This Gloeobacter violaceus (strain ATCC 29082 / PCC 7421) protein is Small ribosomal subunit protein uS10.